A 287-amino-acid chain; its full sequence is 4-diphosphocytidyl-2-C-methyl-D-erythritol kinase (287 aa).

Residue Lys-10 is part of the active site. Residue Pro-92–Ala-102 coordinates ATP. Asp-134 is an active-site residue.

It belongs to the GHMP kinase family. IspE subfamily.

The catalysed reaction is 4-CDP-2-C-methyl-D-erythritol + ATP = 4-CDP-2-C-methyl-D-erythritol 2-phosphate + ADP + H(+). The protein operates within isoprenoid biosynthesis; isopentenyl diphosphate biosynthesis via DXP pathway; isopentenyl diphosphate from 1-deoxy-D-xylulose 5-phosphate: step 3/6. Catalyzes the phosphorylation of the position 2 hydroxy group of 4-diphosphocytidyl-2C-methyl-D-erythritol. This Caldanaerobacter subterraneus subsp. tengcongensis (strain DSM 15242 / JCM 11007 / NBRC 100824 / MB4) (Thermoanaerobacter tengcongensis) protein is 4-diphosphocytidyl-2-C-methyl-D-erythritol kinase.